The primary structure comprises 315 residues: Methionyl-tRNA formyltransferase (315 aa).

Residue 113–116 (SLLP) participates in (6S)-5,6,7,8-tetrahydrofolate binding.

Belongs to the Fmt family.

The catalysed reaction is L-methionyl-tRNA(fMet) + (6R)-10-formyltetrahydrofolate = N-formyl-L-methionyl-tRNA(fMet) + (6S)-5,6,7,8-tetrahydrofolate + H(+). Functionally, attaches a formyl group to the free amino group of methionyl-tRNA(fMet). The formyl group appears to play a dual role in the initiator identity of N-formylmethionyl-tRNA by promoting its recognition by IF2 and preventing the misappropriation of this tRNA by the elongation apparatus. The protein is Methionyl-tRNA formyltransferase of Escherichia coli (strain SMS-3-5 / SECEC).